We begin with the raw amino-acid sequence, 111 residues long: UPF0145 protein BRADO6695 (111 aa).

Belongs to the UPF0145 family.

This chain is UPF0145 protein BRADO6695, found in Bradyrhizobium sp. (strain ORS 278).